The primary structure comprises 704 residues: Mannan-binding lectin serine protease 1 (704 aa).

The N-terminal stretch at 1-24 (MRFLSFRRLLLYHVLCLTLTEVSA) is a signal peptide. The 119-residue stretch at 25–143 (HTVELNEMFG…TGFDAHYMAV (119 aa)) folds into the CUB 1 domain. The interval 25–189 (HTVELNEMFG…HTDNRTCRVE (165 aa)) is homodimerization. The tract at residues 25 to 189 (HTVELNEMFG…HTDNRTCRVE (165 aa)) is interaction with MBL2. The tract at residues 25–283 (HTVELNEMFG…STQSHSIQIL (259 aa)) is interaction with FCN2. Positions 25–305 (HTVELNEMFG…RLSYRAAGNE (281 aa)) are interaction with MBL1. Asn54 carries an N-linked (GlcNAc...) asparagine glycan. Residues Glu73, Asp81, Asp126, Ser128, Asp144, Val145, and Glu147 each coordinate Ca(2+). A disulfide bond links Cys78 and Cys96. Positions 144–187 (DVDECKEREDEELSCDHYCHNYIGGYYCSCRFGYILHTDNRTCR) constitute an EGF-like; calcium-binding domain. 4 cysteine pairs are disulfide-bonded: Cys148–Cys162, Cys158–Cys171, Cys173–Cys186, and Cys190–Cys217. Residues Asn164, Tyr165, and Gly168 each contribute to the Ca(2+) site. A (3R)-3-hydroxyasparagine modification is found at Asn164. The N-linked (GlcNAc...) asparagine glycan is linked to Asn183. One can recognise a CUB 2 domain in the interval 190–302 (CSGNLFTQRT…RGWRLSYRAA (113 aa)). Residues Glu240, Asp250, Asp287, and Ser289 each coordinate Ca(2+). Cys247 and Cys265 are oxidised to a cystine. Sushi domains follow at residues 304–369 (NECP…TCKI) and 370–439 (VDCG…TCLP). 6 cysteine pairs are disulfide-bonded: Cys306–Cys354, Cys334–Cys367, Cys372–Cys419, Cys402–Cys437, Cys441–Cys577, and Cys480–Cys496. N-linked (GlcNAc...) asparagine glycosylation is found at Asn390 and Asn412. The 248-residue stretch at 454–701 (IFNGRPAQKG…NKDWIQRVTG (248 aa)) folds into the Peptidase S1 domain. His495 acts as the Charge relay system in catalysis. Leu538 carries N-linked (GlcNAc...) asparagine glycosylation. Asp557 serves as the catalytic Charge relay system. Glu604 carries an N-linked (GlcNAc...) asparagine glycan. 2 disulfides stabilise this stretch: Cys619–Cys636 and Cys647–Cys677. Ser651 acts as the Charge relay system in catalysis.

This sequence belongs to the peptidase S1 family. Homodimer. Interacts with the oligomeric lectins MBL2, FCN2 and FCN3; triggers the lectin pathway of complement through activation of C3. Interacts with SERPING1. Interacts with COLEC11; probably triggers the lectin pathway of complement. In terms of processing, the iron and 2-oxoglutarate dependent 3-hydroxylation of aspartate and asparagine is (R) stereospecific within EGF domains. N-glycosylated. Some N-linked glycan are of the complex-type. Post-translationally, autoproteolytic processing of the proenzyme produces the active enzyme composed on the heavy and the light chain held together by a disulfide bond. Isoform 1 but not isoform 2 is activated through autoproteolytic processing. In terms of tissue distribution, protein of the plasma which is primarily expressed by liver.

The protein resides in the secreted. With respect to regulation, inhibited by SERPING1 and A2M. Functions in the lectin pathway of complement, which performs a key role in innate immunity by recognizing pathogens through patterns of sugar moieties and neutralizing them. The lectin pathway is triggered upon binding of mannan-binding lectin (MBL) and ficolins to sugar moieties which leads to activation of the associated proteases MASP1 and MASP2. Functions as an endopeptidase and may activate MASP2 or C2 or directly activate C3 the key component of complement reaction. Isoform 2 may have an inhibitory effect on the activation of the lectin pathway of complement or may cleave IGFBP5. Also plays a role in development. This chain is Mannan-binding lectin serine protease 1 (Masp1), found in Rattus norvegicus (Rat).